A 71-amino-acid chain; its full sequence is MDKELLAMLVCPRCQGKLKYDRERAELKCHFDGLAFPIEDEIPVMLEEQARHMDADEKLGKAPGEARDATS.

The protein belongs to the UPF0434 family.

The sequence is that of UPF0434 protein Csal_1588 from Chromohalobacter salexigens (strain ATCC BAA-138 / DSM 3043 / CIP 106854 / NCIMB 13768 / 1H11).